Here is a 148-residue protein sequence, read N- to C-terminus: Deoxyuridine 5'-triphosphate nucleotidohydrolase (148 aa).

Residues 68-70, Asn-81, 85-87, and Lys-95 contribute to the substrate site; these read RSG and TID.

Belongs to the dUTPase family. Mg(2+) serves as cofactor.

The catalysed reaction is dUTP + H2O = dUMP + diphosphate + H(+). The protein operates within pyrimidine metabolism; dUMP biosynthesis; dUMP from dCTP (dUTP route): step 2/2. Functionally, this enzyme is involved in nucleotide metabolism: it produces dUMP, the immediate precursor of thymidine nucleotides and it decreases the intracellular concentration of dUTP so that uracil cannot be incorporated into DNA. The protein is Deoxyuridine 5'-triphosphate nucleotidohydrolase of Thermoanaerobacter sp. (strain X514).